Here is a 181-residue protein sequence, read N- to C-terminus: UPF0302 protein LMOf2365_1950 (181 aa).

The protein belongs to the UPF0302 family.

This is UPF0302 protein LMOf2365_1950 from Listeria monocytogenes serotype 4b (strain F2365).